A 172-amino-acid chain; its full sequence is MTYISKKQAAKKVIVREKPILVRLKLIIGAGTASMTPPLGPNLGQYGINSIEFFNDFNTETKELFETGLALRVILWINVMKAFYFELQMPKISNLLKEYYKVECEAAKGGNVYIEKERLLKDCFKIAILLCTFNKAEKQWEQIEKKYLRITVLEILGTCRSCKIYVKKAENE.

Belongs to the universal ribosomal protein uL11 family.

It localises to the mitochondrion. The sequence is that of Large ribosomal subunit protein uL11m (mrpl11) from Dictyostelium discoideum (Social amoeba).